A 177-amino-acid chain; its full sequence is tRNA (cytidine(56)-2'-O)-methyltransferase (177 aa).

Residues leucine 83 and glycine 108 to valine 112 each bind S-adenosyl-L-methionine.

It belongs to the aTrm56 family. In terms of assembly, homodimer.

Its subcellular location is the cytoplasm. It carries out the reaction cytidine(56) in tRNA + S-adenosyl-L-methionine = 2'-O-methylcytidine(56) in tRNA + S-adenosyl-L-homocysteine + H(+). In terms of biological role, specifically catalyzes the AdoMet-dependent 2'-O-ribose methylation of cytidine at position 56 in tRNAs. The sequence is that of tRNA (cytidine(56)-2'-O)-methyltransferase from Nitrosopumilus maritimus (strain SCM1).